Reading from the N-terminus, the 475-residue chain is ATP synthase subunit beta, chloroplastic (475 aa).

Residue 155 to 162 (GGAGVGKT) coordinates ATP.

This sequence belongs to the ATPase alpha/beta chains family. As to quaternary structure, F-type ATPases have 2 components, CF(1) - the catalytic core - and CF(0) - the membrane proton channel. CF(1) has five subunits: alpha(3), beta(3), gamma(1), delta(1), epsilon(1). CF(0) has four main subunits: a(1), b(1), b'(1) and c(9-12).

Its subcellular location is the plastid. The protein localises to the chloroplast thylakoid membrane. It catalyses the reaction ATP + H2O + 4 H(+)(in) = ADP + phosphate + 5 H(+)(out). Produces ATP from ADP in the presence of a proton gradient across the membrane. The catalytic sites are hosted primarily by the beta subunits. This is ATP synthase subunit beta, chloroplastic from Pyropia yezoensis (Susabi-nori).